Consider the following 407-residue polypeptide: Ornithine cyclodeaminase (407 aa).

Residues Asn-233, Ala-234, Asp-312, Thr-344, Met-345, Leu-346, His-347, Asp-365, Asp-388, and Val-389 each contribute to the NAD(+) site.

This sequence belongs to the AgrE/ArgZ ornithine cyclodeaminase family. NAD(+) is required as a cofactor.

It catalyses the reaction L-ornithine = L-proline + NH4(+). In terms of biological role, catalyzes the conversion of ornithine to proline, with the release of ammonia. The polypeptide is Ornithine cyclodeaminase (Archaeoglobus fulgidus (strain ATCC 49558 / DSM 4304 / JCM 9628 / NBRC 100126 / VC-16)).